A 267-amino-acid polypeptide reads, in one-letter code: Tryptophan synthase alpha chain (267 aa).

Catalysis depends on proton acceptor residues E39 and D50.

The protein belongs to the TrpA family. In terms of assembly, tetramer of two alpha and two beta chains.

The enzyme catalyses (1S,2R)-1-C-(indol-3-yl)glycerol 3-phosphate + L-serine = D-glyceraldehyde 3-phosphate + L-tryptophan + H2O. The protein operates within amino-acid biosynthesis; L-tryptophan biosynthesis; L-tryptophan from chorismate: step 5/5. In terms of biological role, the alpha subunit is responsible for the aldol cleavage of indoleglycerol phosphate to indole and glyceraldehyde 3-phosphate. This Helicobacter hepaticus (strain ATCC 51449 / 3B1) protein is Tryptophan synthase alpha chain.